Consider the following 293-residue polypeptide: Cell wall protein PGA31 (293 aa).

The signal sequence occupies residues 1-18 (MKFLTAASLLTLSSSALA). Asn131 is a glycosylation site (N-linked (GlcNAc...) asparagine). The interval 161 to 187 (ESASSSSSSAAPEPTASSSEAPKETPV) is disordered. The segment covering 163-180 (ASSSSSSAAPEPTASSSE) has biased composition (low complexity). N-linked (GlcNAc...) asparagine glycosylation is present at Asn190. Residues 233-262 (VPSKTASSEAAPPKTTVDSVSKPAPSGKKP) are disordered. The GPI-anchor amidated glycine moiety is linked to residue Gly271. Residues 272–293 (AANALTGGSVAIAVAAAIGLVF) constitute a propeptide, removed in mature form.

The protein belongs to the SRP1/TIP1 family. Post-translationally, the GPI-anchor is attached to the protein in the endoplasmic reticulum and serves to target the protein to the cell surface. There, the glucosamine-inositol phospholipid moiety is cleaved off and the GPI-modified mannoprotein is covalently attached via its lipidless GPI glycan remnant to the 1,6-beta-glucan of the outer cell wall layer.

Its subcellular location is the secreted. It localises to the cell wall. The protein localises to the membrane. Its function is as follows. Component of the cell wall involved in virulence which plays a role in the relationship between C.albicans and the host. Involved in the regulation or assembly of chitin within the cell wall. In Candida albicans (strain SC5314 / ATCC MYA-2876) (Yeast), this protein is Cell wall protein PGA31 (PGA31).